The sequence spans 483 residues: Cysteine--tRNA ligase (483 aa).

Cys-29 contributes to the Zn(2+) binding site. The 'HIGH' region motif lies at 31 to 41 (ITVYDYCHLGH). 3 residues coordinate Zn(2+): Cys-215, His-240, and Glu-244. The 'KMSKS' region motif lies at 272–276 (KMSKS). Lys-275 contacts ATP.

The protein belongs to the class-I aminoacyl-tRNA synthetase family. As to quaternary structure, monomer. Zn(2+) is required as a cofactor.

The protein resides in the cytoplasm. The catalysed reaction is tRNA(Cys) + L-cysteine + ATP = L-cysteinyl-tRNA(Cys) + AMP + diphosphate. The chain is Cysteine--tRNA ligase (cysS) from Synechocystis sp. (strain ATCC 27184 / PCC 6803 / Kazusa).